Consider the following 373-residue polypeptide: tRNA-specific 2-thiouridylase MnmA (373 aa).

Residues 12–19 and methionine 38 each bind ATP; that span reads GMSGGVDS. The tract at residues 98-100 is interaction with target base in tRNA; the sequence is NPD. Residue cysteine 103 is the Nucleophile of the active site. Cysteine 103 and cysteine 200 are oxidised to a cystine. Glycine 127 is a binding site for ATP. The tract at residues 150–152 is interaction with tRNA; sequence KDQ. Cysteine 200 acts as the Cysteine persulfide intermediate in catalysis. Residues 312–313 are interaction with tRNA; that stretch reads RY.

The protein belongs to the MnmA/TRMU family.

The protein resides in the cytoplasm. The catalysed reaction is S-sulfanyl-L-cysteinyl-[protein] + uridine(34) in tRNA + AH2 + ATP = 2-thiouridine(34) in tRNA + L-cysteinyl-[protein] + A + AMP + diphosphate + H(+). Functionally, catalyzes the 2-thiolation of uridine at the wobble position (U34) of tRNA, leading to the formation of s(2)U34. In Streptococcus agalactiae serotype III (strain NEM316), this protein is tRNA-specific 2-thiouridylase MnmA.